The following is a 512-amino-acid chain: MDIISGQALLLLFCFILSCFLIFTTTRSGRISRGATALPPGPPRLPIIGNIHLVGKHPHRSFAELSKTYGPVMSLKLGSLNTVVIASPEAAREVLRTHDQILSARSPTNAVRSINHQDASLVWLPSSSARWRLLRRLSVTQLLSPQRIEATKALRMNKVKELVSFISESSDREESVDISRVAFITTLNIISNILFSVDLGSYNAKASINGVQDTVISVMDAAGTPDAANYFPFLRFLDLQGNVKTFKVCTERLVRVFRGFIDAKIAEKSSQNNPKDVSKNDFVDNLLDYKGDESELSISDIEHLLLDMFTAGTDTSSSTLEWAMTELLKNPKTMAKAQAEIDCVIGQNGIVEESDISKLPYLQAVVKETFRLHTPVPLLIPRKAESDAEILGFMVLKDTQVLVNVWAIGRDPSVWDNPSQFEPERFLGKDMDVRGRDYELTPFGAGRRICPGMPLAMKTVSLMLASLLYSFDWKLPKGVLSEDLDMDETFGLTLHKTNPLHAVPVKKRANIN.

Residues I3 to F23 traverse the membrane as a helical segment. C450 serves as a coordination point for heme.

This sequence belongs to the cytochrome P450 family. Heme serves as cofactor.

It localises to the membrane. In Arabidopsis thaliana (Mouse-ear cress), this protein is Cytochrome P450 76C1 (CYP76C1).